The primary structure comprises 39 residues: Cytochrome b559 subunit beta (39 aa).

Residues 14 to 30 traverse the membrane as a helical segment; sequence WLAIHGLAVPTVSFLGS. Residue His-18 participates in heme binding.

Belongs to the PsbE/PsbF family. In terms of assembly, heterodimer of an alpha subunit and a beta subunit. PSII is composed of 1 copy each of membrane proteins PsbA, PsbB, PsbC, PsbD, PsbE, PsbF, PsbH, PsbI, PsbJ, PsbK, PsbL, PsbM, PsbT, PsbX, PsbY, PsbZ, Psb30/Ycf12, at least 3 peripheral proteins of the oxygen-evolving complex and a large number of cofactors. It forms dimeric complexes. Requires heme b as cofactor.

It localises to the plastid. Its subcellular location is the chloroplast thylakoid membrane. Its function is as follows. This b-type cytochrome is tightly associated with the reaction center of photosystem II (PSII). PSII is a light-driven water:plastoquinone oxidoreductase that uses light energy to abstract electrons from H(2)O, generating O(2) and a proton gradient subsequently used for ATP formation. It consists of a core antenna complex that captures photons, and an electron transfer chain that converts photonic excitation into a charge separation. The polypeptide is Cytochrome b559 subunit beta (Allium textile (Textile onion)).